Here is a 34-residue protein sequence, read N- to C-terminus: Endoglucanase 1 (34 aa).

The enzyme catalyses Endohydrolysis of (1-&gt;4)-beta-D-glucosidic linkages in cellulose, lichenin and cereal beta-D-glucans.. The protein is Endoglucanase 1 of Sclerotinia sclerotiorum (White mold).